Consider the following 478-residue polypeptide: RNA-binding protein 42 (478 aa).

Positions 1-20 (MASAMAGAGPAPGLPVAGGP) are enriched in low complexity. The tract at residues 1–33 (MASAMAGAGPAPGLPVAGGPVVPGPGVGIPGKS) is disordered. An N-acetylalanine modification is found at alanine 2. Position 133 is a phosphoserine (serine 133). Residues arginine 151, arginine 156, arginine 166, and arginine 179 each carry the asymmetric dimethylarginine modification. Disordered stretches follow at residues 171-207 (LSSA…MLPP) and 317-354 (SLRP…PEKL). The segment covering 193 to 205 (PPLPGPPGPPMML) has biased composition (pro residues). Residues 234-478 (ELGLGLGLGL…QKEKKKLGLR (245 aa)) form a necessary for interaction with HNRNPK region. Positions 343–354 (GEDKKKGKPEKL) are enriched in basic and acidic residues. One can recognise an RRM domain in the interval 379 to 457 (FRIFCGDLGN…RPIKLRKSMW (79 aa)).

Belongs to the RRM RBM42 family. Interacts with HNRNPK. As to expression, expressed in cell lines (at protein level). Expressed in heart, brain, spleen, lung, liver, skeletal muscle, kidney and testis.

It is found in the nucleus. It localises to the cytoplasm. Binds (via the RRM domain) to the 3'-untranslated region (UTR) of CDKN1A mRNA. The chain is RNA-binding protein 42 (Rbm42) from Mus musculus (Mouse).